The sequence spans 422 residues: Cytochrome P450-pinF1, plant-inducible (422 aa).

Cys-369 contributes to the heme binding site.

It belongs to the cytochrome P450 family. It depends on heme as a cofactor.

Functionally, not essential for virulence, but may be involved in the detoxification of plant protective agents at the site of wounding. The polypeptide is Cytochrome P450-pinF1, plant-inducible (cyp103) (Rhizobium radiobacter (Agrobacterium tumefaciens)).